The chain runs to 358 residues: WD repeat-containing protein 53 (358 aa).

6 WD repeats span residues 1–38 (MAVK…AWGE), 43–80 (LGHT…VLDV), 85–123 (DSLD…ILDL), 127–166 (KVIR…LWSL), 173–225 (WITN…RIFR), and 232–270 (EQEL…LWDA). A disordered region spans residues 273–311 (EVEKKQKSPTKRTHRKKPKRGTCTKQGGNTNASVTDEEE). Residues 279 to 294 (KSPTKRTHRKKPKRGT) show a composition bias toward basic residues. A compositionally biased stretch (polar residues) spans 295 to 306 (CTKQGGNTNASV). One copy of the WD 7 repeat lies at 314-355 (NILPKLNIEHGEKVNWLLGTKIKGHQNILVADQTSCISVYPL).

This sequence belongs to the WD repeat WDR53 family.

In Homo sapiens (Human), this protein is WD repeat-containing protein 53 (WDR53).